The primary structure comprises 144 residues: Large ribosomal subunit protein uL16 (144 aa).

The span at 1–16 (MLVPKRVKHRKVQRGK) shows a compositional bias: basic residues. The interval 1-20 (MLVPKRVKHRKVQRGKMRGE) is disordered.

It belongs to the universal ribosomal protein uL16 family. Part of the 50S ribosomal subunit.

Functionally, binds 23S rRNA and is also seen to make contacts with the A and possibly P site tRNAs. This is Large ribosomal subunit protein uL16 from Limosilactobacillus fermentum (strain NBRC 3956 / LMG 18251) (Lactobacillus fermentum).